The primary structure comprises 139 residues: Large ribosomal subunit protein uL16 (139 aa).

The disordered stretch occupies residues 1–21; that stretch reads MLMPKRVQYRKTQRGRMKGNA. Residues 7–17 show a composition bias toward basic residues; it reads VQYRKTQRGRM.

It belongs to the universal ribosomal protein uL16 family. As to quaternary structure, part of the 50S ribosomal subunit.

Binds 23S rRNA and is also seen to make contacts with the A and possibly P site tRNAs. The protein is Large ribosomal subunit protein uL16 of Chlorobaculum tepidum (strain ATCC 49652 / DSM 12025 / NBRC 103806 / TLS) (Chlorobium tepidum).